The sequence spans 207 residues: MSHGPLRVGIGGPVGAGKTTLTEKLCAALAHRCSMAVITNDIYTREDAEALMRAQVLPAERIRGVETGGCPHTAIREDASINLAAVADLRRAFPDLDLILIESGGDNLAATFSPELADLTLYVIDTAAGQDIPRKRGPGLARSDLLVVNKTDLAPHVGVDLRLLEEDTKTARGRRPYVMAQLRRGAGVAEIVAFLEREGGLQLLPQE.

12 to 19 (GPVGAGKT) serves as a coordination point for GTP.

It belongs to the SIMIBI class G3E GTPase family. UreG subfamily. As to quaternary structure, homodimer. UreD, UreF and UreG form a complex that acts as a GTP-hydrolysis-dependent molecular chaperone, activating the urease apoprotein by helping to assemble the nickel containing metallocenter of UreC. The UreE protein probably delivers the nickel.

It is found in the cytoplasm. Functionally, facilitates the functional incorporation of the urease nickel metallocenter. This process requires GTP hydrolysis, probably effectuated by UreG. This is Urease accessory protein UreG from Cereibacter sphaeroides (strain ATCC 17025 / ATH 2.4.3) (Rhodobacter sphaeroides).